A 246-amino-acid chain; its full sequence is E3 ubiquitin-protein ligase MARCHF2 (246 aa).

The segment at 56–116 adopts an RING-CH-type zinc-finger fold; it reads GTQSDGPICR…ELCHTEFAVE (61 aa). Zn(2+) is bound by residues cysteine 64, cysteine 67, cysteine 80, cysteine 82, histidine 90, cysteine 93, cysteine 106, and cysteine 109. 2 helical membrane passes run 138–158 and 175–195; these read LFCDMVCFLFITPLAAISGWL and AVGLIALTIALFTIYVLWTLV.

The protein localises to the endoplasmic reticulum membrane. It is found in the lysosome membrane. Its subcellular location is the endosome membrane. It catalyses the reaction S-ubiquitinyl-[E2 ubiquitin-conjugating enzyme]-L-cysteine + [acceptor protein]-L-lysine = [E2 ubiquitin-conjugating enzyme]-L-cysteine + N(6)-ubiquitinyl-[acceptor protein]-L-lysine.. The protein operates within protein modification; protein ubiquitination. E3 ubiquitin-protein ligase which may be involved in endosomal trafficking. E3 ubiquitin ligases accept ubiquitin from an E2 ubiquitin-conjugating enzyme in the form of a thioester and then directly transfer the ubiquitin to targeted substrates. The sequence is that of E3 ubiquitin-protein ligase MARCHF2 (marchf2) from Xenopus laevis (African clawed frog).